The sequence spans 172 residues: Envelope protein UL45 (172 aa).

The Intravirion segment spans residues Met-1–Ala-27. A helical; Signal-anchor for type II membrane protein membrane pass occupies residues Ala-28–Val-48. Topologically, residues Pro-49–Pro-172 are virion surface.

Belongs to the herpesviridae HHV-1 UL45 family.

It localises to the virion membrane. Important virulence factor of HSV neurotropism. Seems to be required for glycoprotein B-induced fusion. Dispensable for growth in vitro. The polypeptide is Envelope protein UL45 (Homo sapiens (Human)).